Here is a 535-residue protein sequence, read N- to C-terminus: CTP synthase (535 aa).

An amidoligase domain region spans residues 1-268; it reads MPNKYIVVTG…VSKILSRLKL (268 aa). S14 provides a ligand contact to CTP. S14 contacts UTP. 15–20 contacts ATP; it reads SVGKGT. Y55 contacts L-glutamine. D72 is an ATP binding site. Residues D72 and E142 each coordinate Mg(2+). CTP contacts are provided by residues 149-151, 189-194, and K225; these read DIE and KTKPLQ. UTP-binding positions include 189–194 and K225; that span reads KTKPLQ. V243 contributes to the ATP binding site. In terms of domain architecture, Glutamine amidotransferase type-1 spans 302-535; sequence YTKLKDSYIS…LGFIRAVASL (234 aa). G359 contributes to the L-glutamine binding site. Catalysis depends on C386, which acts as the Nucleophile; for glutamine hydrolysis. Residues 387–390, E410, and R467 each bind L-glutamine; that span reads FGFQ. Catalysis depends on residues H511 and E513.

It belongs to the CTP synthase family. Homotetramer in the presence of ATP and UTP. The enzyme dissociates into homodimers in the absence of substrate nucleotides.

It carries out the reaction UTP + L-glutamine + ATP + H2O = CTP + L-glutamate + ADP + phosphate + 2 H(+). The catalysed reaction is L-glutamine + H2O = L-glutamate + NH4(+). The enzyme catalyses UTP + NH4(+) + ATP = CTP + ADP + phosphate + 2 H(+). It functions in the pathway pyrimidine metabolism; CTP biosynthesis via de novo pathway; CTP from UDP: step 2/2. Its activity is regulated as follows. Allosterically activated by GTP, when glutamine is the substrate; GTP has no effect on the reaction when ammonia is the substrate. The allosteric effector GTP functions by stabilizing the protein conformation that binds the tetrahedral intermediate(s) formed during glutamine hydrolysis. Inhibited by the product CTP, via allosteric rather than competitive inhibition. Functionally, catalyzes the ATP-dependent amination of UTP to CTP with either L-glutamine or ammonia as the source of nitrogen. Regulates intracellular CTP levels through interactions with the four ribonucleotide triphosphates. The chain is CTP synthase from Saccharolobus solfataricus (strain ATCC 35092 / DSM 1617 / JCM 11322 / P2) (Sulfolobus solfataricus).